The following is a 283-amino-acid chain: MIDKRNKKAVTHISTCLCHSSIPIYGDSPFLNTHRAAMDPRPLVLLLLLASHISTFRQMYFEGETIHFPMGIYGNETTLYMNDIILEGTRANTTTRTISLTTTKKNAGTNLYTVISETGHNATYLITVQPLGQSIHHAYTWAGNTFTLQGQVFEHGNYTRWVRLENAEPKLIISWALSNRTINKGPAYTANMDFDPGNNTLTLHPVLITDAGIFQCVIDQQTNLTLTINFTVSENPPIVAHLDIHKTISRTIAICSCLLIAVIAVLCCLRQLNVNGRGNSEMI.

The first 55 residues, 1–55, serve as a signal peptide directing secretion; it reads MIDKRNKKAVTHISTCLCHSSIPIYGDSPFLNTHRAAMDPRPLVLLLLLASHIST. 8 N-linked (GlcNAc...) asparagine; by host glycosylation sites follow: N75, N92, N121, N157, N179, N198, N223, and N229. The Ig-like domain maps to 129-227; that stretch reads QPLGQSIHHA…IDQQTNLTLT (99 aa).

This is Putative Ig-like domain-containing protein ORF10 from Galliformes (FAdV-1).